Consider the following 881-residue polypeptide: Beta-mannosidase (881 aa).

Positions 1–18 (MHLHLLFLLALCGAGCMA) are cleaved as a signal peptide. N-linked (GlcNAc...) asparagine glycans are attached at residues asparagine 35, asparagine 77, asparagine 89, and asparagine 113. A disulfide bond links cysteine 167 and cysteine 176. Residue 190-192 (WDW) coordinates substrate. Asparagine 226, asparagine 297, and asparagine 302 each carry an N-linked (GlcNAc...) asparagine glycan. Residue asparagine 456 participates in substrate binding. Glutamate 457 acts as the Proton donor in catalysis. Cystine bridges form between cysteine 540-cysteine 629, cysteine 732-cysteine 761, and cysteine 764-cysteine 769. The Nucleophile role is filled by glutamate 554. Residue asparagine 803 is glycosylated (N-linked (GlcNAc...) asparagine).

This sequence belongs to the glycosyl hydrolase 2 family. Monomer.

The protein resides in the lysosome. It catalyses the reaction Hydrolysis of terminal, non-reducing beta-D-mannose residues in beta-D-mannosides.. The protein operates within glycan metabolism; N-glycan degradation. Exoglycosidase that cleaves the single beta-linked mannose residue from the non-reducing end of all N-linked glycoprotein oligosaccharides. The sequence is that of Beta-mannosidase from Rattus norvegicus (Rat).